Here is a 481-residue protein sequence, read N- to C-terminus: Proline--tRNA ligase (481 aa).

The protein belongs to the class-II aminoacyl-tRNA synthetase family. ProS type 3 subfamily. In terms of assembly, homodimer.

It is found in the cytoplasm. It carries out the reaction tRNA(Pro) + L-proline + ATP = L-prolyl-tRNA(Pro) + AMP + diphosphate. In terms of biological role, catalyzes the attachment of proline to tRNA(Pro) in a two-step reaction: proline is first activated by ATP to form Pro-AMP and then transferred to the acceptor end of tRNA(Pro). This is Proline--tRNA ligase from Chlorobium phaeovibrioides (strain DSM 265 / 1930) (Prosthecochloris vibrioformis (strain DSM 265)).